The sequence spans 167 residues: Large ribosomal subunit protein uL10 (167 aa).

This sequence belongs to the universal ribosomal protein uL10 family. As to quaternary structure, part of the ribosomal stalk of the 50S ribosomal subunit. The N-terminus interacts with L11 and the large rRNA to form the base of the stalk. The C-terminus forms an elongated spine to which L12 dimers bind in a sequential fashion forming a multimeric L10(L12)X complex.

In terms of biological role, forms part of the ribosomal stalk, playing a central role in the interaction of the ribosome with GTP-bound translation factors. The chain is Large ribosomal subunit protein uL10 from Tolumonas auensis (strain DSM 9187 / NBRC 110442 / TA 4).